Here is an 886-residue protein sequence, read N- to C-terminus: KH domain-containing protein hrpk-2 (886 aa).

A compositionally biased stretch (basic and acidic residues) spans D359–S368. Residues D359–D433 are disordered. Composition is skewed to basic residues over residues G369–Y388 and H415–H425. KH domains lie at K698–I761 and P775–T839.

The chain is KH domain-containing protein hrpk-2 from Caenorhabditis elegans.